Consider the following 127-residue polypeptide: Glycine cleavage system H protein (127 aa).

A Lipoyl-binding domain is found at 24–105 (TLTVGVTDHA…AYAAWLFKLK (82 aa)). Lysine 65 is modified (N6-lipoyllysine).

It belongs to the GcvH family. The glycine cleavage system is composed of four proteins: P, T, L and H. (R)-lipoate is required as a cofactor.

The glycine cleavage system catalyzes the degradation of glycine. The H protein shuttles the methylamine group of glycine from the P protein to the T protein. The polypeptide is Glycine cleavage system H protein (Azoarcus sp. (strain BH72)).